A 402-amino-acid polypeptide reads, in one-letter code: Argininosuccinate synthase (402 aa).

Residues 9 to 17 and Ala-36 each bind ATP; that span reads AYSGGLDTS. L-citrulline contacts are provided by Tyr-87 and Ser-92. Position 117 (Gly-117) interacts with ATP. Residues Thr-119, Asn-123, and Asp-124 each coordinate L-aspartate. Position 123 (Asn-123) interacts with L-citrulline. Positions 127, 176, 185, 261, and 273 each coordinate L-citrulline.

It belongs to the argininosuccinate synthase family. Type 1 subfamily. In terms of assembly, homotetramer.

The protein localises to the cytoplasm. It carries out the reaction L-citrulline + L-aspartate + ATP = 2-(N(omega)-L-arginino)succinate + AMP + diphosphate + H(+). It participates in amino-acid biosynthesis; L-arginine biosynthesis; L-arginine from L-ornithine and carbamoyl phosphate: step 2/3. This chain is Argininosuccinate synthase, found in Deinococcus radiodurans (strain ATCC 13939 / DSM 20539 / JCM 16871 / CCUG 27074 / LMG 4051 / NBRC 15346 / NCIMB 9279 / VKM B-1422 / R1).